The following is a 261-amino-acid chain: Phosphoadenosine phosphosulfate reductase (261 aa).

This sequence belongs to the PAPS reductase family. CysH subfamily.

It catalyses the reaction [thioredoxin]-disulfide + sulfite + adenosine 3',5'-bisphosphate + 2 H(+) = [thioredoxin]-dithiol + 3'-phosphoadenylyl sulfate. Its pathway is sulfur metabolism; hydrogen sulfide biosynthesis; sulfite from sulfate: step 3/3. Its function is as follows. The NADP dependent reduction of PAPS into sulfite involves thioredoxin which probably plays the role of a thiol carrier. This chain is Phosphoadenosine phosphosulfate reductase (MET16), found in Saccharomyces cerevisiae (strain ATCC 204508 / S288c) (Baker's yeast).